A 301-amino-acid polypeptide reads, in one-letter code: Probable alpha-L-glutamate ligase (301 aa).

The region spanning 104–287 is the ATP-grasp domain; that stretch reads LQLLARKGIG…VAGQLIDYIE (184 aa). Residues K141, 178-179, D187, and 211-213 contribute to the ATP site; these read EF and RSN. Mg(2+)-binding residues include D248, E260, and N262. Mn(2+) contacts are provided by D248, E260, and N262.

It belongs to the RimK family. Mg(2+) serves as cofactor. Requires Mn(2+) as cofactor.

The sequence is that of Probable alpha-L-glutamate ligase from Maridesulfovibrio salexigens (strain ATCC 14822 / DSM 2638 / NCIMB 8403 / VKM B-1763) (Desulfovibrio salexigens).